The primary structure comprises 119 residues: RIIa domain-containing protein 1 (119 aa).

In terms of domain architecture, RIIa spans 70–104; it reads KEVSLLISGFFREMFLKRPDNILEFAAHYFTDPRL.

As to expression, abundant in tissues rich in highly ciliated cells, such as testis, trachea and olfactory epithelium.

The polypeptide is RIIa domain-containing protein 1 (Riiad1) (Mus musculus (Mouse)).